The primary structure comprises 248 residues: Aquaporin Z (248 aa).

2 consecutive transmembrane segments (helical) span residues 11–31 and 36–56; these read FIGTFWLVLGGCGAAVLAAAF and IGFAGVSLAFGLTLLTMAFAI. An NPA 1 motif is present at residues 65–67; the sequence is NPA. Transmembrane regions (helical) follow at residues 87–107, 132–152, and 161–181; these read IAAQVLGGIAGAGVLYLIAGG, LLACLVCEVVMTFMFLMIILG, and GFAPIAIGLSLTLIHLISIPV. Residues 187 to 189 carry the NPA 2 motif; it reads NPA. Residues 203-223 form a helical membrane-spanning segment; the sequence is IAELWLFWLAPIVGAALAGLF.

Belongs to the MIP/aquaporin (TC 1.A.8) family. As to quaternary structure, homotetramer.

It localises to the cell inner membrane. It carries out the reaction H2O(in) = H2O(out). Channel that permits osmotically driven movement of water in both directions. It is involved in the osmoregulation and in the maintenance of cell turgor during volume expansion in rapidly growing cells. It mediates rapid entry or exit of water in response to abrupt changes in osmolarity. The sequence is that of Aquaporin Z from Gloeobacter violaceus (strain ATCC 29082 / PCC 7421).